A 544-amino-acid polypeptide reads, in one-letter code: CTP synthase (544 aa).

An amidoligase domain region spans residues 1–265 (MTKFIFVTGG…DDIICEHLDL (265 aa)). Ser-13 is a CTP binding site. Ser-13 contacts UTP. ATP is bound by residues 14–19 (SLGKGI) and Asp-71. 2 residues coordinate Mg(2+): Asp-71 and Glu-139. Residues 146–148 (DIE), 186–191 (KTKPTQ), and Lys-222 each bind CTP. UTP contacts are provided by residues 186–191 (KTKPTQ) and Lys-222. Residues 290 to 542 (NIAMVGKYVD…VEAALAYQAD (253 aa)) enclose the Glutamine amidotransferase type-1 domain. Residue Gly-351 participates in L-glutamine binding. Residue Cys-378 is the Nucleophile; for glutamine hydrolysis of the active site. L-glutamine contacts are provided by residues 379-382 (LGMQ), Glu-402, and Arg-469. Catalysis depends on residues His-515 and Glu-517.

The protein belongs to the CTP synthase family. In terms of assembly, homotetramer.

It carries out the reaction UTP + L-glutamine + ATP + H2O = CTP + L-glutamate + ADP + phosphate + 2 H(+). It catalyses the reaction L-glutamine + H2O = L-glutamate + NH4(+). The catalysed reaction is UTP + NH4(+) + ATP = CTP + ADP + phosphate + 2 H(+). It participates in pyrimidine metabolism; CTP biosynthesis via de novo pathway; CTP from UDP: step 2/2. Allosterically activated by GTP, when glutamine is the substrate; GTP has no effect on the reaction when ammonia is the substrate. The allosteric effector GTP functions by stabilizing the protein conformation that binds the tetrahedral intermediate(s) formed during glutamine hydrolysis. Inhibited by the product CTP, via allosteric rather than competitive inhibition. Functionally, catalyzes the ATP-dependent amination of UTP to CTP with either L-glutamine or ammonia as the source of nitrogen. Regulates intracellular CTP levels through interactions with the four ribonucleotide triphosphates. The chain is CTP synthase from Laribacter hongkongensis (strain HLHK9).